The primary structure comprises 74 residues: MNKVVVYVLALSILLFFGLPNTTLARVQYGSPVSRKEIGKGVWDQKVFNEIKIAVGGSDSVRAHSKDHKSNPNG.

An N-terminal signal peptide occupies residues 1 to 25; sequence MNKVVVYVLALSILLFFGLPNTTLA. The SCOOP motif motif lies at 52-66; the sequence is KIAVGGSDSVRAHSK. A SxS motif essential for MIK2 binding motif is present at residues 58–60; that stretch reads SDS.

It belongs to the serine rich endogenous peptide (SCOOP) phytocytokine family. Interacts with MIK2 (via extracellular leucine-rich repeat domain); this interaction triggers the formation of complex between MIK2 and the BAK1/SERK3 and SERK4 coreceptors, and subsequent BAK1 activation by phosphorylation. As to expression, mostly expressed in roots, and, to a lower extent, in seedlings shoots.

The protein resides in the cell membrane. Its subcellular location is the secreted. It is found in the extracellular space. The protein localises to the apoplast. In terms of biological role, brassicaceae-specific phytocytokine (plant endogenous peptide released into the apoplast) perceived by MIK2 in a BAK1/SERK3 and SERK4 coreceptors-dependent manner, that modulates various physiological and antimicrobial processes including growth prevention and reactive oxygen species (ROS) response regulation. Inhibits root growth. The sequence is that of Serine rich endogenous peptide 23 from Arabidopsis thaliana (Mouse-ear cress).